The sequence spans 126 residues: Holo-[acyl-carrier-protein] synthase (126 aa).

Mg(2+)-binding residues include Asp9 and Glu58.

Belongs to the P-Pant transferase superfamily. AcpS family. The cofactor is Mg(2+).

It is found in the cytoplasm. It catalyses the reaction apo-[ACP] + CoA = holo-[ACP] + adenosine 3',5'-bisphosphate + H(+). In terms of biological role, transfers the 4'-phosphopantetheine moiety from coenzyme A to a Ser of acyl-carrier-protein. The protein is Holo-[acyl-carrier-protein] synthase of Salmonella newport (strain SL254).